The chain runs to 234 residues: Glutathione S-transferase U11 (234 aa).

The GST N-terminal domain occupies 11-90; that stretch reads EYVKLLGAWP…YVDETWLSGP (80 aa). Residues 21 to 22, 47 to 48, 61 to 62, and 74 to 75 each bind glutathione; these read SP, LS, QI, and ES. Positions 96–228 constitute a GST C-terminal domain; the sequence is DPFDRAVARF…KLVQFARLKF (133 aa).

This sequence belongs to the GST superfamily. Tau family.

It localises to the cytoplasm. The protein localises to the cytosol. It catalyses the reaction RX + glutathione = an S-substituted glutathione + a halide anion + H(+). In terms of biological role, may be involved in the conjugation of reduced glutathione to a wide number of exogenous and endogenous hydrophobic electrophiles and have a detoxification role against certain herbicides. The protein is Glutathione S-transferase U11 (GSTU11) of Arabidopsis thaliana (Mouse-ear cress).